Here is a 301-residue protein sequence, read N- to C-terminus: N-carbamoylputrescine amidase (301 aa).

Residues 11 to 269 (VSVAAVQFAC…EDVLVAEFDL (259 aa)) enclose the CN hydrolase domain. Glu50 acts as the Proton acceptor in catalysis. Residue Lys123 is the Proton donor of the active site. Cys160 acts as the Nucleophile in catalysis.

This sequence belongs to the carbon-nitrogen hydrolase superfamily. In terms of assembly, homooctamer.

It carries out the reaction N-carbamoylputrescine + H2O + 2 H(+) = putrescine + NH4(+) + CO2. Its pathway is amine and polyamine biosynthesis; putrescine biosynthesis via agmatine pathway; putrescine from N-carbamoylputrescine (amidase route): step 1/1. In terms of biological role, involved in polyamine biosynthesis. The polypeptide is N-carbamoylputrescine amidase (CPA) (Oryza sativa subsp. japonica (Rice)).